The following is a 339-amino-acid chain: uncharacterized protein (339 aa).

Positions 17–111 (VRGEIKCLDV…WEDLSLPQNE (95 aa)) constitute a Rhodanese domain.

This is an uncharacterized protein from Schizosaccharomyces pombe (strain 972 / ATCC 24843) (Fission yeast).